Here is a 414-residue protein sequence, read N- to C-terminus: Serine hydroxymethyltransferase (414 aa).

(6S)-5,6,7,8-tetrahydrofolate is bound by residues leucine 121 and 125–127 (GHL). Residue lysine 229 is modified to N6-(pyridoxal phosphate)lysine.

It belongs to the SHMT family. Homodimer. Requires pyridoxal 5'-phosphate as cofactor.

It is found in the cytoplasm. The enzyme catalyses (6R)-5,10-methylene-5,6,7,8-tetrahydrofolate + glycine + H2O = (6S)-5,6,7,8-tetrahydrofolate + L-serine. It functions in the pathway one-carbon metabolism; tetrahydrofolate interconversion. Its pathway is amino-acid biosynthesis; glycine biosynthesis; glycine from L-serine: step 1/1. Catalyzes the reversible interconversion of serine and glycine with tetrahydrofolate (THF) serving as the one-carbon carrier. This reaction serves as the major source of one-carbon groups required for the biosynthesis of purines, thymidylate, methionine, and other important biomolecules. Also exhibits THF-independent aldolase activity toward beta-hydroxyamino acids, producing glycine and aldehydes, via a retro-aldol mechanism. This is Serine hydroxymethyltransferase from Variovorax paradoxus (strain S110).